Reading from the N-terminus, the 272-residue chain is GATA zinc finger domain-containing protein 1 (272 aa).

The GATA-type zinc finger occupies 9 to 33; the sequence is CSVCKTTSSSMWKKGPQGEILCHHC. The segment at 67–120 is disordered; sequence TFASTSAAPPQSNGGGGGKQSKQEIHRRSARLRNTKYKSAPAAEKKVSTKGKGR. The residue at position 167 (Lys167) is an N6-acetyllysine. A Glycyl lysine isopeptide (Lys-Gly) (interchain with G-Cter in SUMO2) cross-link involves residue Lys265.

It is found in the nucleus. This is GATA zinc finger domain-containing protein 1 (GATAD1) from Bos taurus (Bovine).